The primary structure comprises 249 residues: Ubiquinone biosynthesis O-methyltransferase (249 aa).

The segment at 1–21 (MIPEVSNEASQPAAHRQENVD) is disordered. 4 residues coordinate S-adenosyl-L-methionine: R52, G72, D93, and M137.

This sequence belongs to the methyltransferase superfamily. UbiG/COQ3 family.

The catalysed reaction is a 3-demethylubiquinol + S-adenosyl-L-methionine = a ubiquinol + S-adenosyl-L-homocysteine + H(+). The enzyme catalyses a 3-(all-trans-polyprenyl)benzene-1,2-diol + S-adenosyl-L-methionine = a 2-methoxy-6-(all-trans-polyprenyl)phenol + S-adenosyl-L-homocysteine + H(+). It participates in cofactor biosynthesis; ubiquinone biosynthesis. Functionally, O-methyltransferase that catalyzes the 2 O-methylation steps in the ubiquinone biosynthetic pathway. This Sodalis glossinidius (strain morsitans) protein is Ubiquinone biosynthesis O-methyltransferase.